The sequence spans 603 residues: Elongation factor 4 (603 aa).

The region spanning 7 to 191 (SNIRNFSIVA…AIVTRLPPPK (185 aa)) is the tr-type G domain. Residues 19–24 (DHGKST) and 138–141 (NKVD) contribute to the GTP site.

It belongs to the TRAFAC class translation factor GTPase superfamily. Classic translation factor GTPase family. LepA subfamily.

Its subcellular location is the cell inner membrane. The catalysed reaction is GTP + H2O = GDP + phosphate + H(+). Its function is as follows. Required for accurate and efficient protein synthesis under certain stress conditions. May act as a fidelity factor of the translation reaction, by catalyzing a one-codon backward translocation of tRNAs on improperly translocated ribosomes. Back-translocation proceeds from a post-translocation (POST) complex to a pre-translocation (PRE) complex, thus giving elongation factor G a second chance to translocate the tRNAs correctly. Binds to ribosomes in a GTP-dependent manner. This Bradyrhizobium diazoefficiens (strain JCM 10833 / BCRC 13528 / IAM 13628 / NBRC 14792 / USDA 110) protein is Elongation factor 4.